A 318-amino-acid polypeptide reads, in one-letter code: L-lactate dehydrogenase (318 aa).

NAD(+) is bound by residues Val-18, Asp-39, Lys-44, Tyr-69, and 83–84 (GA). Residues Gln-86 and Arg-92 each contribute to the substrate site. NAD(+) is bound by residues Ser-105, 122–124 (VSN), and Ser-147. Position 124-127 (124-127 (NPVD)) interacts with substrate. Substrate is bound at residue 152–155 (DTSR). The active-site Proton acceptor is His-179. Phosphotyrosine is present on Tyr-225. Thr-234 lines the substrate pocket.

The protein belongs to the LDH/MDH superfamily. LDH family. In terms of assembly, homotetramer.

It is found in the cytoplasm. The enzyme catalyses (S)-lactate + NAD(+) = pyruvate + NADH + H(+). Its pathway is fermentation; pyruvate fermentation to lactate; (S)-lactate from pyruvate: step 1/1. Its function is as follows. Catalyzes the conversion of lactate to pyruvate. The polypeptide is L-lactate dehydrogenase (Clostridium botulinum (strain 657 / Type Ba4)).